A 635-amino-acid chain; its full sequence is Putative adagio-like protein 2 (635 aa).

A compositionally biased stretch (acidic residues) spans 1-25; that stretch reads MEWDSDSEGSGDEEEEEEEEEEEGV. The tract at residues 1–32 is disordered; sequence MEWDSDSEGSGDEEEEEEEEEEEGVEVGGGGD. One can recognise a PAS domain in the interval 44–123; that stretch reads ALAIEGVLGA…TDIRRCLEEG (80 aa). Cysteine 91 is subject to S-4a-FMN cysteine. One can recognise an F-box domain in the interval 209–255; the sequence is SDLFLLSDEVLCQKILSRLSPRDIASVNSVCKRLYHLTRNDDLWRMV. Kelch repeat units follow at residues 371 to 421, 423 to 474, 476 to 530, and 542 to 594; these read RLVL…TLDG, KLVV…VYDG, KILM…PPPR, and RILI…VVGG.

The protein belongs to the ADAGIO family. In terms of processing, FMN binds covalently to cysteine after exposure to blue light and is reversed in the dark.

The protein localises to the nucleus. It functions in the pathway protein modification; protein ubiquitination. Its function is as follows. Component of an E3 ubiquitin ligase complex that plays a central role in blue light-dependent circadian cycles. Acts as a blue light photoreceptor, due to the presence of FMN, that mediates light-regulated protein degradation of critical clock components by targeting them to the proteasome complex. The protein is Putative adagio-like protein 2 of Oryza sativa subsp. japonica (Rice).